Consider the following 299-residue polypeptide: Non-homologous end-joining factor 1 (299 aa).

Residues methionine 1–leucine 135 are globular head. Residues proline 128 to serine 170 are a coiled coil. Phosphoserine; by PRKDC is present on residues serine 132, serine 203, serine 245, and serine 251. Residues glutamine 224–lysine 288 form a C-terminal tail region. Residues asparagine 255 to threonine 266 are compositionally biased toward polar residues. A disordered region spans residues asparagine 255–serine 299. Serine 263 is subject to Phosphoserine. At threonine 266 the chain carries Phosphothreonine. Serine 287 is subject to Phosphoserine. Residues lysine 288–serine 299 show a composition bias toward basic residues. The short motif at valine 289–serine 299 is the XLM element.

The protein belongs to the XRCC4-XLF family. XLF subfamily. Homodimer; mainly exists as a homodimer when not associated with XRCC4. Interacts with XRCC4; the interaction is direct and is mediated via a head-to-head interaction between N-terminal head regions. Component of the core long-range non-homologous end joining (NHEJ) complex (also named DNA-PK complex) composed of PRKDC, LIG4, XRCC4, XRCC6/Ku70, XRCC5/Ku86 and NHEJ1/XLF. Additional component of the NHEJ complex includes PAXX. Following autophosphorylation, PRKDC dissociates from DNA, leading to formation of the short-range NHEJ complex, composed of LIG4, XRCC4, XRCC6/Ku70, XRCC5/Ku86 and NHEJ1/XLF. Interacts with POLL (DNA polymerase lambda); promoting POLL recruitment to double-strand breaks (DSBs) and stimulation of the end-filling activity of POLL. Phosphorylated by PRKDC at the C-terminus in response to DNA damage. Phosphorylations by PRKDC at the C-terminus of XRCC4 and NHEJ1/XLF are highly redundant and regulate ability of the XRCC4-NHEJ1/XLF subcomplex to bridge DNA. Phosphorylation does not prevent interaction with XRCC4 but disrupts ability to bridge DNA and promotes detachment from DNA. As to expression, ubiquitously expressed.

The protein localises to the nucleus. It is found in the chromosome. Its function is as follows. DNA repair protein involved in DNA non-homologous end joining (NHEJ); it is required for double-strand break (DSB) repair and V(D)J recombination and is also involved in telomere maintenance. Plays a key role in NHEJ by promoting the ligation of various mismatched and non-cohesive ends. Together with PAXX, collaborates with DNA polymerase lambda (POLL) to promote joining of non-cohesive DNA ends. May act in concert with XRCC5-XRCC6 (Ku) to stimulate XRCC4-mediated joining of blunt ends and several types of mismatched ends that are non-complementary or partially complementary. In some studies, has been shown to associate with XRCC4 to form alternating helical filaments that bridge DNA and act like a bandage, holding together the broken DNA until it is repaired. Alternatively, it has also been shown that rather than forming filaments, a single NHEJ1 dimer interacts through both head domains with XRCC4 to promote the close alignment of DNA ends. The XRCC4-NHEJ1/XLF subcomplex binds to the DNA fragments of a DSB in a highly diffusive manner and robustly bridges two independent DNA molecules, holding the broken DNA fragments in close proximity to one other. The mobility of the bridges ensures that the ends remain accessible for further processing by other repair factors. Binds DNA in a length-dependent manner. The chain is Non-homologous end-joining factor 1 from Homo sapiens (Human).